Reading from the N-terminus, the 479-residue chain is Proline--tRNA ligase (479 aa).

It belongs to the class-II aminoacyl-tRNA synthetase family. ProS type 3 subfamily. Homodimer.

The protein resides in the cytoplasm. The catalysed reaction is tRNA(Pro) + L-proline + ATP = L-prolyl-tRNA(Pro) + AMP + diphosphate. In terms of biological role, catalyzes the attachment of proline to tRNA(Pro) in a two-step reaction: proline is first activated by ATP to form Pro-AMP and then transferred to the acceptor end of tRNA(Pro). In Mesomycoplasma hyopneumoniae (strain J / ATCC 25934 / NCTC 10110) (Mycoplasma hyopneumoniae), this protein is Proline--tRNA ligase.